Reading from the N-terminus, the 758-residue chain is Translation initiation factor IF-2 (758 aa).

The disordered stretch occupies residues 55–168 (EKNVGKQATQ…KTHQPSIPVK (114 aa)). Polar residues-rich tracts occupy residues 60–78 (KQATQNISQKSQSNGQQNH) and 86–95 (QRQQSATSKP). Over residues 96–136 (KVNNQQHSNSSNEKSKNTKGNQNRNMTQNNNNNNNNNNNNR) the composition is skewed to low complexity. A tr-type G domain is found at 259 to 428 (ERPPVVTIMG…LLVAEVGELK (170 aa)). A G1 region spans residues 268–275 (GHVDHGKT). 268–275 (GHVDHGKT) is a GTP binding site. Residues 293 to 297 (GITQH) form a G2 region. Residues 314–317 (DTPG) form a G3 region. GTP is bound by residues 314-318 (DTPGH) and 368-371 (NKMD). The interval 368–371 (NKMD) is G4. The interval 404–406 (SAL) is G5.

Belongs to the TRAFAC class translation factor GTPase superfamily. Classic translation factor GTPase family. IF-2 subfamily.

It is found in the cytoplasm. One of the essential components for the initiation of protein synthesis. Protects formylmethionyl-tRNA from spontaneous hydrolysis and promotes its binding to the 30S ribosomal subunits. Also involved in the hydrolysis of GTP during the formation of the 70S ribosomal complex. The sequence is that of Translation initiation factor IF-2 from Lysinibacillus sphaericus (strain C3-41).